The primary structure comprises 208 residues: Imidazoleglycerol-phosphate dehydratase (208 aa).

This sequence belongs to the imidazoleglycerol-phosphate dehydratase family.

The protein resides in the cytoplasm. It carries out the reaction D-erythro-1-(imidazol-4-yl)glycerol 3-phosphate = 3-(imidazol-4-yl)-2-oxopropyl phosphate + H2O. It functions in the pathway amino-acid biosynthesis; L-histidine biosynthesis; L-histidine from 5-phospho-alpha-D-ribose 1-diphosphate: step 6/9. The sequence is that of Imidazoleglycerol-phosphate dehydratase from Psychrobacter sp. (strain PRwf-1).